The sequence spans 285 residues: Tryptophan synthase alpha chain (285 aa).

Catalysis depends on proton acceptor residues E53 and D64.

This sequence belongs to the TrpA family. Tetramer of two alpha and two beta chains.

It catalyses the reaction (1S,2R)-1-C-(indol-3-yl)glycerol 3-phosphate + L-serine = D-glyceraldehyde 3-phosphate + L-tryptophan + H2O. It participates in amino-acid biosynthesis; L-tryptophan biosynthesis; L-tryptophan from chorismate: step 5/5. The alpha subunit is responsible for the aldol cleavage of indoleglycerol phosphate to indole and glyceraldehyde 3-phosphate. In Bordetella parapertussis (strain 12822 / ATCC BAA-587 / NCTC 13253), this protein is Tryptophan synthase alpha chain.